Consider the following 203-residue polypeptide: Large ribosomal subunit protein eL15 (203 aa).

The interval 166–203 (ATGKKSRGINKGHRYNNTRSGRRHTWKRQNTQSYWRYR) is disordered. Positions 169–192 (KKSRGINKGHRYNNTRSGRRHTWK) are enriched in basic residues. Residues 193–203 (RQNTQSYWRYR) show a composition bias toward polar residues.

Belongs to the eukaryotic ribosomal protein eL15 family.

This is Large ribosomal subunit protein eL15 (rpl15) from Aspergillus niger.